A 392-amino-acid polypeptide reads, in one-letter code: Ribosomal RNA large subunit methyltransferase G (392 aa).

This sequence belongs to the methyltransferase superfamily. RlmG family.

It is found in the cytoplasm. It catalyses the reaction guanosine(1835) in 23S rRNA + S-adenosyl-L-methionine = N(2)-methylguanosine(1835) in 23S rRNA + S-adenosyl-L-homocysteine + H(+). Functionally, specifically methylates the guanine in position 1835 (m2G1835) of 23S rRNA. In Shewanella frigidimarina (strain NCIMB 400), this protein is Ribosomal RNA large subunit methyltransferase G.